The primary structure comprises 388 residues: GTPase Obg (388 aa).

Residues 1-159 (MKFIDEASIR…RSLRLELLLL (159 aa)) enclose the Obg domain. Residues 160–333 (ADVGLLGMPN…LSLKLLDYIA (174 aa)) form the OBG-type G domain. Residues 166 to 173 (GMPNAGKS), 191 to 195 (FTTLV), 213 to 216 (DIPG), 283 to 286 (NKTD), and 314 to 316 (SAF) each bind GTP. Residues Ser-173 and Thr-193 each contribute to the Mg(2+) site.

The protein belongs to the TRAFAC class OBG-HflX-like GTPase superfamily. OBG GTPase family. In terms of assembly, monomer. Mg(2+) serves as cofactor.

It localises to the cytoplasm. An essential GTPase which binds GTP, GDP and possibly (p)ppGpp with moderate affinity, with high nucleotide exchange rates and a fairly low GTP hydrolysis rate. Plays a role in control of the cell cycle, stress response, ribosome biogenesis and in those bacteria that undergo differentiation, in morphogenesis control. The protein is GTPase Obg of Shewanella denitrificans (strain OS217 / ATCC BAA-1090 / DSM 15013).